A 625-amino-acid polypeptide reads, in one-letter code: tRNA uridine 5-carboxymethylaminomethyl modification enzyme MnmG (625 aa).

13 to 18 (GGGHAG) is a binding site for FAD. 273–287 (GPRYCPSIEDKVVRF) serves as a coordination point for NAD(+).

It belongs to the MnmG family. Homodimer. Heterotetramer of two MnmE and two MnmG subunits. It depends on FAD as a cofactor.

The protein localises to the cytoplasm. NAD-binding protein involved in the addition of a carboxymethylaminomethyl (cmnm) group at the wobble position (U34) of certain tRNAs, forming tRNA-cmnm(5)s(2)U34. The sequence is that of tRNA uridine 5-carboxymethylaminomethyl modification enzyme MnmG from Methylococcus capsulatus (strain ATCC 33009 / NCIMB 11132 / Bath).